A 173-amino-acid polypeptide reads, in one-letter code: Large ribosomal subunit protein uL10 (173 aa).

This sequence belongs to the universal ribosomal protein uL10 family. Part of the ribosomal stalk of the 50S ribosomal subunit. The N-terminus interacts with L11 and the large rRNA to form the base of the stalk. The C-terminus forms an elongated spine to which L12 dimers bind in a sequential fashion forming a multimeric L10(L12)X complex.

Its function is as follows. Forms part of the ribosomal stalk, playing a central role in the interaction of the ribosome with GTP-bound translation factors. This chain is Large ribosomal subunit protein uL10, found in Chlorobium phaeobacteroides (strain BS1).